The sequence spans 130 residues: Iron-sulfur cluster insertion protein ErpA (130 aa).

Residues C58, C122, and C124 each contribute to the iron-sulfur cluster site.

Belongs to the HesB/IscA family. Homodimer. Requires iron-sulfur cluster as cofactor.

Its function is as follows. Required for insertion of 4Fe-4S clusters for at least IspG. In Stenotrophomonas maltophilia (strain R551-3), this protein is Iron-sulfur cluster insertion protein ErpA.